Consider the following 400-residue polypeptide: Multidrug resistance protein MdtH (400 aa).

Residues 1 to 12 (MSRVSQARNLGK) lie on the Cytoplasmic side of the membrane. A helical membrane pass occupies residues 13 to 33 (YFLLIDNMLVVLGFFVVFPLI). At 34–98 (SIRFVDQMGW…GFATMGIAHE (65 aa)) the chain is on the periplasmic side. A helical transmembrane segment spans residues 99 to 116 (PWLLWFSCLLSGLGGTLF). The Cytoplasmic segment spans residues 117–138 (DPPRSALVVKLIRPQQRGRFFS). The helical transmembrane segment at 139–159 (LLMMQDSAGAVIGALLGSWLL) threads the bilayer. The Periplasmic portion of the chain corresponds to 160–164 (QYDFR). The chain crosses the membrane as a helical span at residues 165-185 (LVCATGAVLFVLCAAFNAWLL). Residues 186–213 (PAWKLSTVRTPVREGMTRVMRDKRFVTY) lie on the Cytoplasmic side of the membrane. A helical transmembrane segment spans residues 214 to 232 (VLTLAGYYMLAVQVMLPIM). At 233 to 241 (VNDVAGAPS) the chain is on the periplasmic side. Residues 242-262 (AVKWMYAIEACLSLTLLYPIA) form a helical membrane-spanning segment. Over 263-274 (RWSEKHFRLEHR) the chain is Cytoplasmic. The chain crosses the membrane as a helical span at residues 275 to 295 (LMAGLLIMSLSMMPVGMVSGL). Topologically, residues 296-297 (QQ) are periplasmic. The chain crosses the membrane as a helical span at residues 298–318 (LFTLICLFYIGSIIAEPARET). Over 319–337 (LSASLADARARGSYMGFSR) the chain is Cytoplasmic. A helical membrane pass occupies residues 338 to 358 (LGLAIGGAIGYIGGGWLFDLG). Topologically, residues 359–365 (KSAHQPE) are periplasmic. The helical transmembrane segment at 366–386 (LPWMMLGIIGIFTFLALGWQF) threads the bilayer. Residues 387–400 (SQKRAARRLLERDA) lie on the Cytoplasmic side of the membrane.

The protein belongs to the major facilitator superfamily. DHA1 family. MdtH (TC 2.A.1.2.21) subfamily.

Its subcellular location is the cell inner membrane. The polypeptide is Multidrug resistance protein MdtH (Shigella boydii serotype 4 (strain Sb227)).